Here is a 759-residue protein sequence, read N- to C-terminus: Protein hunchback (759 aa).

Disordered stretches follow at residues 30–51 (EPGH…PIPS) and 171–215 (SSEK…EDMK). The span at 39-51 (SVASSPRQSPIPS) shows a compositional bias: polar residues. At T179 the chain carries Phosphothreonine. Residues S189, S208, S210, and S211 each carry the phosphoserine modification. Over residues 199-215 (EPEKEHDQMSNSSEDMK) the composition is skewed to basic and acidic residues. 4 C2H2-type zinc fingers span residues 241-263 (YKCK…TRTH), 270-292 (LQCP…IRKH), 298-320 (FQCD…RKSH), and 326-350 (YRCA…KYGH). 3 disordered regions span residues 366–419 (LVID…TSQL), 513–565 (QLQQ…PQQP), and 606–696 (MTSP…APAS). 2 stretches are compositionally biased toward low complexity: residues 399–419 (VAAV…TSQL) and 513–522 (QLQQQNQQQS). Positions 523–532 (DNEEEEQDDE) are enriched in acidic residues. Residues S537 and S540 each carry the phosphoserine modification. Low complexity predominate over residues 655 to 696 (ANTSASSTASSSGNSSNASSNGNSSSNSSSNGTSSAAAAPAS). 2 C2H2-type zinc fingers span residues 706-728 (YECK…MGYH) and 734-758 (FKCN…RNAH).

Belongs to the hunchback C2H2-type zinc-finger protein family.

The protein localises to the nucleus. In terms of biological role, gap class segmentation protein that controls development of head structures. This Drosophila yakuba (Fruit fly) protein is Protein hunchback.